We begin with the raw amino-acid sequence, 206 residues long: MIASIFGKITFVGKRKIIVEANCISYWFNVKENHSFEKNLEKPRQVFCQIIKRMVTNQILEEGFAFNTLEEKEWFSKFIELNGIGSKTALNLLNNNLEEMRDYIKNSNYHALTKLTGSNSKVARALLALELYDRDDGGKRIKPNTAMANDYDEMFDTLKSLGYKPQDIQNALSKIEIKPNFDVSEVIAEVIKLMSFQNNEVTNKTA.

Residues 1-67 (MIASIFGKIT…QILEEGFAFN (67 aa)) are domain I. Positions 68 to 141 (TLEEKEWFSK…YDRDDGGKRI (74 aa)) are domain II. Residues 141–145 (IKPNT) form a flexible linker region. Residues 146-206 (AMANDYDEMF…QNNEVTNKTA (61 aa)) form a domain III region.

The protein belongs to the RuvA family. Homotetramer. Forms an RuvA(8)-RuvB(12)-Holliday junction (HJ) complex. HJ DNA is sandwiched between 2 RuvA tetramers; dsDNA enters through RuvA and exits via RuvB. An RuvB hexamer assembles on each DNA strand where it exits the tetramer. Each RuvB hexamer is contacted by two RuvA subunits (via domain III) on 2 adjacent RuvB subunits; this complex drives branch migration. In the full resolvosome a probable DNA-RuvA(4)-RuvB(12)-RuvC(2) complex forms which resolves the HJ.

It localises to the cytoplasm. The RuvA-RuvB-RuvC complex processes Holliday junction (HJ) DNA during genetic recombination and DNA repair, while the RuvA-RuvB complex plays an important role in the rescue of blocked DNA replication forks via replication fork reversal (RFR). RuvA specifically binds to HJ cruciform DNA, conferring on it an open structure. The RuvB hexamer acts as an ATP-dependent pump, pulling dsDNA into and through the RuvAB complex. HJ branch migration allows RuvC to scan DNA until it finds its consensus sequence, where it cleaves and resolves the cruciform DNA. This Mycoplasma pneumoniae (strain ATCC 29342 / M129 / Subtype 1) (Mycoplasmoides pneumoniae) protein is Holliday junction branch migration complex subunit RuvA.